The chain runs to 104 residues: Large ribosomal subunit protein uL24 (104 aa).

Belongs to the universal ribosomal protein uL24 family. As to quaternary structure, part of the 50S ribosomal subunit.

One of two assembly initiator proteins, it binds directly to the 5'-end of the 23S rRNA, where it nucleates assembly of the 50S subunit. Functionally, one of the proteins that surrounds the polypeptide exit tunnel on the outside of the subunit. The polypeptide is Large ribosomal subunit protein uL24 (Afipia carboxidovorans (strain ATCC 49405 / DSM 1227 / KCTC 32145 / OM5) (Oligotropha carboxidovorans)).